A 543-amino-acid chain; its full sequence is MTPGELRRLYLIIRVFLSYGLDELIPNIRLTLPLRVGRHLFFWLSNRHKDKSLGERLRLALQELGPVWIKFGQMMSTRRDLFPPNIADQLALLQDRVASFDGALARKHIEIAMGGALETWFDDFDSQALASASIAQVHTARLKENGKEVVLKVIRPDILPIIKADVRLMYRLAGWVPKLLPDGRRLRPREVVREYEKTLLDELNLLREAANAIQLRRNFEDSPMLYIPEVYSDYCRESVLVMERIYGIPVSDIAALEDQGTNMKLLAERGVQVFFTQVFRDSFFHADMHPGNIFVSYEHPHDPLYIGIDCGIVGSLNKADKRYLAENFIAFFNRDYRRVAELHVDSGWVPRDTNVEDFEFAIRTVCEPIFEKPLAEISFGHVLLNLFNTARRFNMEVQPQLVLLQKTLLYVEGLGRQLYPQLDLWTTAKPFLESWLRDQVGLPAVIRALKEKAPFWAEKFPELPELVYDSLQQHKLLQQSVEKLTIQIQGQQQRQGQSRYLFGVGATLLVSGTILFLADATEVSTGFIVAGALAWFIGWRRTC.

In terms of domain architecture, Protein kinase spans 123–501; it reads DFDSQALASA…QQRQGQSRYL (379 aa). Residues 129–137 and lysine 152 contribute to the ATP site; that span reads LASASIAQV. Aspartate 287 (proton acceptor) is an active-site residue. A helical membrane pass occupies residues 517–539; sequence LADATEVSTGFIVAGALAWFIGW.

The protein belongs to the ABC1 family. UbiB subfamily.

Its subcellular location is the cell inner membrane. It participates in cofactor biosynthesis; ubiquinone biosynthesis [regulation]. Its function is as follows. Is probably a protein kinase regulator of UbiI activity which is involved in aerobic coenzyme Q (ubiquinone) biosynthesis. The chain is Probable protein kinase UbiB from Yersinia pseudotuberculosis serotype O:1b (strain IP 31758).